A 480-amino-acid chain; its full sequence is Chromosomal replication initiator protein DnaA (480 aa).

Residues methionine 1–phenylalanine 71 are domain I, interacts with DnaA modulators. The domain II stretch occupies residues phenylalanine 71–serine 139. The disordered stretch occupies residues serine 91 to glycine 115. Basic and acidic residues predominate over residues alanine 97–alanine 108. A domain III, AAA+ region region spans residues methionine 140–alanine 356. Residues glycine 184, glycine 186, lysine 187, and threonine 188 each coordinate ATP. Residues glutamine 357–valine 480 form a domain IV, binds dsDNA region.

The protein belongs to the DnaA family. Oligomerizes as a right-handed, spiral filament on DNA at oriC.

It localises to the cytoplasm. Its function is as follows. Plays an essential role in the initiation and regulation of chromosomal replication. ATP-DnaA binds to the origin of replication (oriC) to initiate formation of the DNA replication initiation complex once per cell cycle. Binds the DnaA box (a 9 base pair repeat at the origin) and separates the double-stranded (ds)DNA. Forms a right-handed helical filament on oriC DNA; dsDNA binds to the exterior of the filament while single-stranded (ss)DNA is stabiized in the filament's interior. The ATP-DnaA-oriC complex binds and stabilizes one strand of the AT-rich DNA unwinding element (DUE), permitting loading of DNA polymerase. After initiation quickly degrades to an ADP-DnaA complex that is not apt for DNA replication. Binds acidic phospholipids. This chain is Chromosomal replication initiator protein DnaA, found in Roseiflexus castenholzii (strain DSM 13941 / HLO8).